The sequence spans 175 residues: tRNA-acetylating toxin 3 (175 aa).

Positions 95, 97, 103, 105, 107, 108, 133, 138, 141, and 142 each coordinate acetyl-CoA. Tyrosine 143 is a catalytic residue. The acetyl-CoA site is built by glycine 145 and phenylalanine 146.

It belongs to the acetyltransferase family. GNAT subfamily. In terms of assembly, homodimer (in absence of antitoxin); has a condensed and elongated form. Forms a complex with cognate antitoxin TacA3. Forms a 4:2 antitoxin:toxin complex with cognate antitoxin TacA3. Forms a 4:4 antitoxin:toxin complex with promoter DNA, where 2 TacT3 dimers bridge 2 TacA3 dimers. Only TacA3 contacts promoter DNA in the octomeric form. TacT3 may contact DNA in the hexameric form.

The catalysed reaction is glycyl-tRNA(Gly) + acetyl-CoA = N-acetylglycyl-tRNA(Gly) + CoA + H(+). Its function is as follows. Toxic component of a type II toxin-antitoxin (TA) system. Acetylates tRNA and inhibits translation. Acetylates only Gly-tRNA on all 3 Gly-tRNA(Gly) isoacceptors in situ. In vitro acetylates mainly Ile/Leu and Gly. Overexpression during the lag phase of a tacA3-tacT3 deletion strain leads to a 150-fold increase in persister cells in the presence of cefotaxime and a non-growth state in the absence of antibiotic. Persister cell formation and the growth defect are neutralized by cognate antitoxin TacA3, but not by TacA1 or TacA2. Plays a role in persister cell formation. Functionally, the TacA3-TacT3 complex both represses and derepresses expression of its own operon. The hexameric 4:2 TacA3-TacT3 complex binds promoter DNA and represses its transcription; both subunits are required. The octomeric 4:4 TacA3-TacT3 complex derepresses the operon. The shift from hexameric to octomeric complex probably alters DNA-binding, leading to dissociation from the operator DNA and derepression. In Salmonella typhimurium (strain 14028s / SGSC 2262), this protein is tRNA-acetylating toxin 3.